Consider the following 92-residue polypeptide: Small ribosomal subunit protein uS19 (92 aa).

This sequence belongs to the universal ribosomal protein uS19 family.

Its function is as follows. Protein S19 forms a complex with S13 that binds strongly to the 16S ribosomal RNA. The protein is Small ribosomal subunit protein uS19 of Sodalis glossinidius (strain morsitans).